Here is a 416-residue protein sequence, read N- to C-terminus: Choline/ethanolaminephosphotransferase 1 (416 aa).

The segment at 1–20 is disordered; the sequence is MSGHRSTRKRCGDSHPESPV. S18 carries the post-translational modification Phosphoserine. A Phosphothreonine modification is found at T40. N86 serves as a coordination point for CDP-choline. A run of 2 helical transmembrane segments spans residues 89-108 and 116-133; these read TIIGLSINICTTILLVFYCP and LWAYIACACGLFIYQSLD. D133 lines the Mg(2+) pocket. The N-linked (GlcNAc...) asparagine glycan is linked to N144. E151 serves as a coordination point for CDP-choline. D154 lines the Mg(2+) pocket. Catalysis depends on H155, which acts as the Proton acceptor. 8 consecutive transmembrane segments (helical) span residues 156 to 176, 180 to 199, 210 to 230, 246 to 267, 286 to 306, 315 to 334, 349 to 363, and 368 to 388; these read GCDSLSTVFVVLGTCIAVQLG, DWMFFCCFAGTFMFYCAHWQ, IIDVTEVQIFIIIMHLLAVIG, MKLLPALCTVAGTIFSCTNYFR, VLSPFLHIGSVITLAVMIYKK, HPCLYILTFGFVSAKITNKL, TAFIGPALLFLDQYF, and DEYIVLWIALIFSFFDLIRYC. D158 contributes to the Mg(2+) binding site.

The protein belongs to the CDP-alcohol phosphatidyltransferase class-I family. As to quaternary structure, homodimer. Mg(2+) is required as a cofactor. Requires Mn(2+) as cofactor.

The protein resides in the endoplasmic reticulum membrane. It is found in the nucleus membrane. The enzyme catalyses CDP-ethanolamine + a 1,2-diacyl-sn-glycerol = a 1,2-diacyl-sn-glycero-3-phosphoethanolamine + CMP + H(+). The catalysed reaction is CDP-choline + a 1,2-diacyl-sn-glycerol = a 1,2-diacyl-sn-glycero-3-phosphocholine + CMP + H(+). It carries out the reaction 1-O-alkyl-2-acyl-sn-glycerol + CDP-choline = a 1-O-alkyl-2-acyl-sn-glycero-3-phosphocholine + CMP + H(+). It catalyses the reaction a 1-O-(1Z-alkenyl)-2-acyl-sn-glycerol + CDP-choline = a 1-O-(1Z-alkenyl)-2-acyl-sn-glycero-3-phosphocholine + CMP + H(+). The enzyme catalyses 1,2-dioctanoyl-sn-glycerol + CDP-choline = 1,2-dioctanoyl-sn-glycero-3-phosphocholine + CMP + H(+). The catalysed reaction is 1,2-didecanoyl-sn-glycerol + CDP-choline = 1,2-didecanoyl-sn-glycero-3-phosphocholine + CMP + H(+). It carries out the reaction CDP-choline + 1,2-di-(9Z-octadecenoyl)-sn-glycerol = 1,2-di-(9Z-octadecenoyl)-sn-glycero-3-phosphocholine + CMP + H(+). It catalyses the reaction 1-hexadecanoyl-2-(9Z-octadecenoyl)-sn-glycerol + CDP-choline = 1-hexadecanoyl-2-(9Z-octadecenoyl)-sn-glycero-3-phosphocholine + CMP + H(+). The enzyme catalyses CDP-ethanolamine + 1,2-di-(9Z-octadecenoyl)-sn-glycerol = 1,2-di-(9Z-octadecenoyl)-sn-glycero-3-phosphoethanolamine + CMP + H(+). The catalysed reaction is 1-hexadecanoyl-2-(9Z-octadecenoyl)-sn-glycerol + CDP-ethanolamine = 1-hexadecanoyl-2-(9Z-octadecenoyl)-sn-glycero-3-phosphoethanolamine + CMP + H(+). It carries out the reaction 1-hexadecanoyl-2-(4Z,7Z,10Z,13Z,16Z,19Z-docosahexaenoyl)-sn-glycerol + CDP-choline = 1-hexadecanoyl-2-(4Z,7Z,10Z,13Z,16Z,19Z-docosahexaenoyl)-sn-glycero-3-phosphocholine + CMP + H(+). It catalyses the reaction 1,2-di-(9Z-hexadecenoyl)-sn-glycerol + CDP-choline = 1,2-di-(9Z-hexadecenoyl)-sn-glycero-3-phosphocholine + CMP + H(+). The enzyme catalyses 1,2-di-(9Z-hexadecenoyl)-sn-glycerol + CDP-ethanolamine = 1,2-di-(9Z-hexadecenoyl)-sn-glycero-3-phosphoethanolamine + CMP + H(+). The catalysed reaction is 1-O-hexadecyl-2-acetyl-sn-glycerol + CDP-choline = 1-O-hexadecyl-2-acetyl-sn-glycero-3-phosphocholine + CMP + H(+). It carries out the reaction 1-O-hexadecyl-2-(5Z,8Z,11Z,14Z-eicosatetraenoyl)-sn-glycerol + CDP-choline = 1-O-hexadecyl-2-(5Z,8Z,11Z,14Z)-eicosatetraenoyl-sn-glycero-3-phosphocholine + CMP + H(+). The protein operates within phospholipid metabolism; phosphatidylethanolamine biosynthesis; phosphatidylethanolamine from ethanolamine: step 3/3. It functions in the pathway phospholipid metabolism; phosphatidylcholine biosynthesis; phosphatidylcholine from phosphocholine: step 2/2. Functionally, catalyzes both phosphatidylcholine and phosphatidylethanolamine biosynthesis from CDP-choline and CDP-ethanolamine, respectively. Involved in protein-dependent process of phospholipid transport to distribute phosphatidyl choline to the lumenal surface. Has a higher cholinephosphotransferase activity than ethanolaminephosphotransferase activity. This Mus musculus (Mouse) protein is Choline/ethanolaminephosphotransferase 1.